A 485-amino-acid polypeptide reads, in one-letter code: GlcNAc-binding protein A (485 aa).

A signal peptide spans 1–29 (MKKQPQKTLLAIALSVVSGTAMSHGYVSA). Residues 30-200 (VENGVAEARV…SFYNVIDVKF (171 aa)) form the Chitin-binding type-4 domain. The region spanning 437-478 (AGTKVLASDGAIYQCKPFPYSGYCVQWTPTATQYQPGTGSHW) is the Chitin-binding type-3 domain.

The protein belongs to the GbpA family.

It localises to the secreted. In terms of biological role, probably interacts with GlcNAc residues. May promote attachment to both epithelial cell surfaces and chitin. In Vibrio vulnificus (strain YJ016), this protein is GlcNAc-binding protein A.